The sequence spans 546 residues: Chaperonin GroEL (546 aa).

ATP contacts are provided by residues 29-32 (TLGP), K50, 86-90 (DGTTT), G414, 477-479 (NAL), and D493.

Belongs to the chaperonin (HSP60) family. Forms a cylinder of 14 subunits composed of two heptameric rings stacked back-to-back. Interacts with the co-chaperonin GroES.

The protein resides in the cytoplasm. The catalysed reaction is ATP + H2O + a folded polypeptide = ADP + phosphate + an unfolded polypeptide.. Together with its co-chaperonin GroES, plays an essential role in assisting protein folding. The GroEL-GroES system forms a nano-cage that allows encapsulation of the non-native substrate proteins and provides a physical environment optimized to promote and accelerate protein folding. In Leptospira interrogans serogroup Icterohaemorrhagiae serovar copenhageni (strain Fiocruz L1-130), this protein is Chaperonin GroEL.